The primary structure comprises 165 residues: Endoribonuclease YbeY (165 aa).

Zn(2+)-binding residues include histidine 130, histidine 134, and histidine 140.

It belongs to the endoribonuclease YbeY family. It depends on Zn(2+) as a cofactor.

The protein resides in the cytoplasm. In terms of biological role, single strand-specific metallo-endoribonuclease involved in late-stage 70S ribosome quality control and in maturation of the 3' terminus of the 16S rRNA. In Streptococcus gordonii (strain Challis / ATCC 35105 / BCRC 15272 / CH1 / DL1 / V288), this protein is Endoribonuclease YbeY.